The primary structure comprises 305 residues: Acetaldehyde dehydrogenase (305 aa).

13 to 16 (SGNI) contacts NAD(+). The active-site Acyl-thioester intermediate is Cys-128. NAD(+)-binding positions include 159 to 167 (SAGPGTRQN) and Asn-278.

This sequence belongs to the acetaldehyde dehydrogenase family.

It carries out the reaction acetaldehyde + NAD(+) + CoA = acetyl-CoA + NADH + H(+). This is Acetaldehyde dehydrogenase from Roseiflexus castenholzii (strain DSM 13941 / HLO8).